Consider the following 542-residue polypeptide: CTP synthase (542 aa).

Positions 1–265 are amidoligase domain; the sequence is MARYVFITGG…DSEVLSAFGI (265 aa). Ser-13 provides a ligand contact to CTP. A UTP-binding site is contributed by Ser-13. Residue 14 to 19 coordinates ATP; that stretch reads SLGKGI. Position 54 (Tyr-54) interacts with L-glutamine. Position 71 (Asp-71) interacts with ATP. Positions 71 and 139 each coordinate Mg(2+). CTP is bound by residues 146–148, 186–191, and Lys-222; these read DIE and KTKPTQ. UTP contacts are provided by residues 186–191 and Lys-222; that span reads KTKPTQ. In terms of domain architecture, Glutamine amidotransferase type-1 spans 291 to 541; sequence TIAIVGKYTG…IEAAIEQSRL (251 aa). Gly-353 contacts L-glutamine. Catalysis depends on Cys-380, which acts as the Nucleophile; for glutamine hydrolysis. L-glutamine-binding positions include 381-384, Glu-404, and Arg-469; that span reads FGMQ. Residues His-514 and Glu-516 contribute to the active site.

Belongs to the CTP synthase family. As to quaternary structure, homotetramer.

The enzyme catalyses UTP + L-glutamine + ATP + H2O = CTP + L-glutamate + ADP + phosphate + 2 H(+). It catalyses the reaction L-glutamine + H2O = L-glutamate + NH4(+). It carries out the reaction UTP + NH4(+) + ATP = CTP + ADP + phosphate + 2 H(+). Its pathway is pyrimidine metabolism; CTP biosynthesis via de novo pathway; CTP from UDP: step 2/2. Its activity is regulated as follows. Allosterically activated by GTP, when glutamine is the substrate; GTP has no effect on the reaction when ammonia is the substrate. The allosteric effector GTP functions by stabilizing the protein conformation that binds the tetrahedral intermediate(s) formed during glutamine hydrolysis. Inhibited by the product CTP, via allosteric rather than competitive inhibition. Its function is as follows. Catalyzes the ATP-dependent amination of UTP to CTP with either L-glutamine or ammonia as the source of nitrogen. Regulates intracellular CTP levels through interactions with the four ribonucleotide triphosphates. The sequence is that of CTP synthase from Brucella anthropi (strain ATCC 49188 / DSM 6882 / CCUG 24695 / JCM 21032 / LMG 3331 / NBRC 15819 / NCTC 12168 / Alc 37) (Ochrobactrum anthropi).